The following is a 150-amino-acid chain: Triosephosphate isomerase (150 aa).

Residues N9 and K11 each contribute to the substrate site. Residue H95 is the Electrophile of the active site.

This sequence belongs to the triosephosphate isomerase family. In terms of assembly, homodimer.

The protein resides in the cytoplasm. It catalyses the reaction D-glyceraldehyde 3-phosphate = dihydroxyacetone phosphate. It participates in carbohydrate biosynthesis; gluconeogenesis. Its pathway is carbohydrate degradation; glycolysis; D-glyceraldehyde 3-phosphate from glycerone phosphate: step 1/1. This is Triosephosphate isomerase (tpiA) from Mycoplasmoides pirum (Mycoplasma pirum).